Reading from the N-terminus, the 157-residue chain is MKEMDERKQEGELHLLGGSTVYKQDYAPEVLEAFTNKHQGNDYWVRFNCPEFTSLCPITGQPDFATIHIDYIPDVKMVESKSLKLYLFSFRNHGAFHEDCVNIIMKDLIKLMDPKYIEITGIFTPRGGISIYPYCNYGRPNTKFEQLAEKRLFDHNQ.

C56 acts as the Thioimide intermediate in catalysis. D63 acts as the Proton donor in catalysis. Residues 78–80 (VES) and 97–98 (HE) contribute to the substrate site.

This sequence belongs to the GTP cyclohydrolase I family. QueF type 1 subfamily.

Its subcellular location is the cytoplasm. It carries out the reaction 7-aminomethyl-7-carbaguanine + 2 NADP(+) = 7-cyano-7-deazaguanine + 2 NADPH + 3 H(+). The protein operates within tRNA modification; tRNA-queuosine biosynthesis. In terms of biological role, catalyzes the NADPH-dependent reduction of 7-cyano-7-deazaguanine (preQ0) to 7-aminomethyl-7-deazaguanine (preQ1). This is NADPH-dependent 7-cyano-7-deazaguanine reductase from Parabacteroides distasonis (strain ATCC 8503 / DSM 20701 / CIP 104284 / JCM 5825 / NCTC 11152).